The following is a 130-amino-acid chain: RxLR effector protein PITG_14783 (130 aa).

An N-terminal signal peptide occupies residues 1 to 20 (MRLPYVFAATMATLLVSSNA). Positions 27–58 (AMLSSPNEQHQRQLRSHQTPVEDQEPDEERSL) are disordered. The short motif at 38–56 (RQLRSHQTPVEDQEPDEER) is the RxLR-dEER element.

The protein belongs to the RxLR effector family.

Its subcellular location is the secreted. The protein localises to the host nucleus. It is found in the host cytoplasm. In terms of biological role, effector that enhances P.infestans colonization of Nicotiana benthamiana leaves. The polypeptide is RxLR effector protein PITG_14783 (Phytophthora infestans (strain T30-4) (Potato late blight agent)).